Here is a 301-residue protein sequence, read N- to C-terminus: 33 kDa chaperonin (301 aa).

2 cysteine pairs are disulfide-bonded: Cys239–Cys241 and Cys272–Cys275.

This sequence belongs to the HSP33 family. In terms of processing, under oxidizing conditions two disulfide bonds are formed involving the reactive cysteines. Under reducing conditions zinc is bound to the reactive cysteines and the protein is inactive.

Its subcellular location is the cytoplasm. Redox regulated molecular chaperone. Protects both thermally unfolding and oxidatively damaged proteins from irreversible aggregation. Plays an important role in the bacterial defense system toward oxidative stress. The polypeptide is 33 kDa chaperonin (Trichormus variabilis (strain ATCC 29413 / PCC 7937) (Anabaena variabilis)).